We begin with the raw amino-acid sequence, 333 residues long: Tetraacyldisaccharide 4'-kinase (333 aa).

ATP is bound at residue 55–62; it reads SVGGNGKT.

It belongs to the LpxK family.

The enzyme catalyses a lipid A disaccharide + ATP = a lipid IVA + ADP + H(+). It functions in the pathway glycolipid biosynthesis; lipid IV(A) biosynthesis; lipid IV(A) from (3R)-3-hydroxytetradecanoyl-[acyl-carrier-protein] and UDP-N-acetyl-alpha-D-glucosamine: step 6/6. In terms of biological role, transfers the gamma-phosphate of ATP to the 4'-position of a tetraacyldisaccharide 1-phosphate intermediate (termed DS-1-P) to form tetraacyldisaccharide 1,4'-bis-phosphate (lipid IVA). The protein is Tetraacyldisaccharide 4'-kinase of Aeromonas hydrophila subsp. hydrophila (strain ATCC 7966 / DSM 30187 / BCRC 13018 / CCUG 14551 / JCM 1027 / KCTC 2358 / NCIMB 9240 / NCTC 8049).